The chain runs to 82 residues: Small ribosomal subunit protein eS21y (82 aa).

N-acetylmethionine is present on M1.

Belongs to the eukaryotic ribosomal protein eS21 family.

This chain is Small ribosomal subunit protein eS21y (RPS21C), found in Arabidopsis thaliana (Mouse-ear cress).